The chain runs to 214 residues: Thymidylate kinase (214 aa).

Residue 14 to 21 (GLEGAGKT) participates in ATP binding.

The protein belongs to the thymidylate kinase family.

The enzyme catalyses dTMP + ATP = dTDP + ADP. In terms of biological role, phosphorylation of dTMP to form dTDP in both de novo and salvage pathways of dTTP synthesis. The sequence is that of Thymidylate kinase from Mannheimia succiniciproducens (strain KCTC 0769BP / MBEL55E).